The primary structure comprises 488 residues: Acetyl-coenzyme A carboxylase carboxyl transferase subunit beta, chloroplastic (488 aa).

Positions 227–488 (LWIQCDNCYG…LHAFFPLNTN (262 aa)) constitute a CoA carboxyltransferase N-terminal domain. 4 residues coordinate Zn(2+): Cys-231, Cys-234, Cys-247, and Cys-250. The C4-type zinc finger occupies 231-250 (CDNCYGLMYKKVKMNVCEQC).

Belongs to the AccD/PCCB family. As to quaternary structure, acetyl-CoA carboxylase is a heterohexamer composed of biotin carboxyl carrier protein, biotin carboxylase and 2 subunits each of ACCase subunit alpha and ACCase plastid-coded subunit beta (accD). Requires Zn(2+) as cofactor. In terms of tissue distribution, accumulates in fatty acids synthesizing tissues such as embryos, expanding leaves, flower buds, flowers, and developing siliques.

It is found in the plastid. The protein localises to the chloroplast membrane. The protein resides in the chloroplast stroma. It catalyses the reaction N(6)-carboxybiotinyl-L-lysyl-[protein] + acetyl-CoA = N(6)-biotinyl-L-lysyl-[protein] + malonyl-CoA. Its pathway is lipid metabolism; malonyl-CoA biosynthesis; malonyl-CoA from acetyl-CoA: step 1/1. Its function is as follows. Component of the acetyl coenzyme A carboxylase (ACC) complex. Biotin carboxylase (BC) catalyzes the carboxylation of biotin on its carrier protein (BCCP) and then the CO(2) group is transferred by the transcarboxylase to acetyl-CoA to form malonyl-CoA. This is Acetyl-coenzyme A carboxylase carboxyl transferase subunit beta, chloroplastic from Arabidopsis thaliana (Mouse-ear cress).